Consider the following 2332-residue polypeptide: Genome polyprotein (2332 aa).

The Peptidase C28 domain occupies 1–201 (MHTTDCFIAL…WKAMVQRKLK (201 aa)). Residues 1–1480 (MHTTDCFIAL…SFVKRAFKRL (1480 aa)) lie on the Cytoplasmic side of the membrane. Active-site for leader protease activity residues include Cys51, His148, and Asp163. Disordered stretches follow at residues 199 to 218 (KLKG…QSGN) and 238 to 265 (QLGD…NTQN). Gly202 is lipidated: N-myristoyl glycine; by host. Composition is skewed to polar residues over residues 204–218 (GQSS…QSGN) and 238–251 (QLGD…SNEG). Residues 252–265 (STDTTSTHTTNTQN) are compositionally biased toward low complexity. The segment at 789-797 (ALLRAATYY) is antigenic epitope. Residues 868-870 (RGD) carry the Cell attachment site motif. An SF3 helicase domain is found at 1189 to 1353 (NVHIANLCKV…DGYKINNKLD (165 aa)). 1217–1224 (GKSGQGKS) lines the ATP pocket. Residues 1481–1501 (KENFEIVALCLTLLANIVIMI) lie within the membrane without spanning it. The Cytoplasmic segment spans residues 1502–2332 (RETRKRQKMV…RWVNAVCGDA (831 aa)). Composition is skewed to basic and acidic residues over residues 1529-1538 (KTLDEAEKNP) and 1549-1563 (FRER…RDDV). Residues 1529 to 1584 (KTLDEAEKNPLETSGASTVGFRERTLPGQKARDDVNSEPAQPAEEQPQAEGPYAGP) form a disordered region. Over residues 1566 to 1578 (EPAQPAEEQPQAE) the composition is skewed to low complexity. Residues Tyr1581, Tyr1604, and Tyr1628 each carry the O-(5'-phospho-RNA)-tyrosine modification. The Peptidase C3 domain maps to 1652 to 1848 (APPTDLQKMV…YCSCVSRSML (197 aa)). His1695 serves as the catalytic For protease 3C activity; Proton donor/acceptor. Residues Asp1733 and Cys1812 each act as for protease 3C activity in the active site. The Nuclear localization signal signature appears at 1878–1886 (MRKTKLAPT). Positions 2096–2214 (RNVWDVDYSA…ASDYDLDFEA (119 aa)) constitute a RdRp catalytic domain. The active-site For RdRp activity is the Asp2200.

It belongs to the picornaviruses polyprotein family. As to quaternary structure, interacts with host ISG15. Capsid protein VP1: Interacts (via R-G-D motif) with host ITGAV/ITGB6. In terms of assembly, interacts (via R-G-D motif) with host ITGAV/ITGB6. Interacts with host MAVS; this interaction inhibits binding of host TRAF3 to MAVS, thereby suppressing interferon-mediated responses. Forms homooligomers. As to quaternary structure, homohexamer. Interacts with host VIM. Interacts with host BECN1. In terms of assembly, interacts with host DCTN3. Interacts with RNA-dependent RNA polymerase; this interaction allows 3B-1 to binds 2 polymerases and act as a primer. It also allows the recruitment of the RNA-dependent RNA polymerase to host membranes. As to quaternary structure, interacts with RNA-dependent RNA polymerase; this interaction allows 3B-2 to act as a primer. In terms of assembly, interacts with RNA-dependent RNA polymerase; this interaction allows 3B-3 to act as a primer. Interacts with 3B-1; this interaction allows 3B-1 to binds 2 polymerases and act as a primer. It also allows the recruitment of the RNA-dependent RNA polymerase to host membranes. Interacts with 3B-2; this interaction allows 3B-2 to act as a primer. Interacts with 3B-3; this interaction allows 3B-3 to act as a primer. Removes six residues from its own C-terminus, generating sLb(pro). In terms of processing, specific enzymatic cleavages in vivo by the viral proteases yield a variety of precursors and mature proteins. The polyprotein seems to be cotranslationally cleaved at the 2A/2B junction by a ribosomal skip from one codon to the next without formation of a peptide bond. This process would release the L-P1-2A peptide from the translational complex. Post-translationally, during virion maturation, immature virions are rendered infectious following cleavage of VP0 into VP4 and VP2. This maturation seems to be an autocatalytic event triggered by the presence of RNA in the capsid and is followed by a conformational change of the particle. Myristoylation is required during RNA encapsidation and formation of the mature virus particle. In terms of processing, uridylylated by the polymerase and covalently linked to the 5'-end of genomic RNA. These uridylylated forms act as a nucleotide-peptide primer for the polymerase.

The protein localises to the host nucleus. Its subcellular location is the host cytoplasm. It is found in the virion. It localises to the host endoplasmic reticulum membrane. The protein resides in the host cytoplasmic vesicle membrane. It carries out the reaction Autocatalytically cleaves itself from the polyprotein of the foot-and-mouth disease virus by hydrolysis of a Lys-|-Gly bond, but then cleaves host cell initiation factor eIF-4G at bonds -Gly-|-Arg- and -Lys-|-Arg-.. The catalysed reaction is a ribonucleoside 5'-triphosphate + H2O = a ribonucleoside 5'-diphosphate + phosphate + H(+). The enzyme catalyses RNA(n) + a ribonucleoside 5'-triphosphate = RNA(n+1) + diphosphate. It catalyses the reaction Selective cleavage of Gln-|-Gly bond in the poliovirus polyprotein. In other picornavirus reactions Glu may be substituted for Gln, and Ser or Thr for Gly.. In terms of biological role, autocatalytically cleaves itself from the polyprotein at the L/VP0 junction. Also cleaves the host translation initiation factors EIF4G1 and EIF4G3, in order to shut off the capped cellular mRNA transcription. Plays a role in counteracting host innate antiviral response using diverse mechanisms. Possesses a deubiquitinase activity acting on both 'Lys-48' and 'Lys-63'-linked polyubiquitin chains. In turn, inhibits the ubiquitination and subsequent activation of key signaling molecules of type I IFN response such as host RIGI, TBK1, TRAF3 and TRAF6. Inhibits host NF-kappa-B activity by inducing a decrease in RELA mRNA levels. Cleaves a peptide bond in the C-terminus of host ISG15, resulting in the damaging of this modifier that can no longer be attached to target proteins. Also cleaves host G3BP1 and G3BP2 in order to inhibit cytoplasmic stress granules assembly. Its function is as follows. Lies on the inner surface of the capsid shell. After binding to the host receptor, the capsid undergoes conformational changes. Capsid protein VP4 is released, capsid protein VP1 N-terminus is externalized, and together, they shape a pore in the host membrane through which the viral genome is translocated into the host cell cytoplasm. After genome has been released, the channel shrinks. Functionally, forms an icosahedral capsid of pseudo T=3 symmetry with capsid proteins VP1 and VP3. The capsid is composed of 60 copies of each capsid protein organized in the form of twelve pentamers and encloses the viral positive strand RNA genome. Upon acidifcation in the endosome, dissociates into pentamers. Forms an icosahedral capsid of pseudo T=3 symmetry with capsid proteins VP0 and VP3. The capsid is composed of 60 copies of each capsid protein organized in the form of twelve pentamers and encloses the viral positive strand RNA genome. Upon acidifcation in the endosome, dissociates into pentamers. In terms of biological role, forms an icosahedral capsid of pseudo T=3 symmetry with capsid proteins VP2 and VP3. The capsid is composed of 60 copies of each capsid protein organized in the form of twelve pentamers and encloses the viral positive strand RNA genome. Mediates cell entry by attachment to an integrin receptor, usually host ITGAV/ITGB6. In addition, targets host MAVS to suppress type I IFN pathway. Upon acidifcation in the endosome, dissociates into pentamers. Its function is as follows. Mediates self-processing of the polyprotein by a translational effect termed 'ribosome skipping'. Mechanistically, 2A-mediated cleavage occurs between the C-terminal glycine and the proline of the downstream protein 2B. In the case of foot-and-mouth disease virus, the 2A oligopeptide is post-translationally 'trimmed' from the C-terminus of the upstream protein 1D by 3C proteinase. Functionally, plays an essential role in the virus replication cycle by acting as a viroporin. Creates a pore in the host endoplasmic reticulum and as a consequence releases Ca2+ in the cytoplasm of infected cell. In turn, high levels of cytoplasmic calcium may trigger membrane trafficking and transport of viral ER-associated proteins to viroplasms, sites of viral genome replication. Associates with and induces structural rearrangements of intracellular membranes. Triggers host autophagy by interacting with host BECN1 and thereby promotes viral replication. Participates in viral replication and interacts with host DHX9. Displays RNA-binding, nucleotide binding and NTPase activities. May play a role in virion morphogenesis and viral RNA encapsidation by interacting with the capsid protein VP3. In terms of biological role, plays important roles in virus replication, virulence and host range. Cooperates with host DDX56 to inhibit IRF3 nuclear translocation and subsequent type I interferon production. Its function is as follows. Covalently linked to the 5'-end of both the positive-strand and negative-strand genomic RNAs. Acts as a genome-linked replication primer. Functionally, cysteine protease that generates mature viral proteins from the precursor polyprotein. In addition to its proteolytic activity, binds to viral RNA and thus influences viral genome replication. RNA and substrate bind cooperatively to the protease. RNA-directed RNA polymerase 3D-POL replicates genomic and antigenomic RNA by recognizing replications specific signals. Covalently attaches UMP to a tyrosine of VPg, which is used to prime RNA synthesis. The positive stranded RNA genome is first replicated at virus induced membranous vesicles, creating a dsRNA genomic replication form. This dsRNA is then used as template to synthesize positive stranded RNA genomes. ss(+)RNA genomes are either translated, replicated or encapsidated. The sequence is that of Genome polyprotein from Foot-and-mouth disease virus (isolate -/Germany/A5Westerwald/1951 serotype A) (FMDV).